Here is a 173-residue protein sequence, read N- to C-terminus: Translation initiation factor IF-3 (173 aa).

The protein belongs to the IF-3 family. In terms of assembly, monomer.

Its subcellular location is the cytoplasm. Functionally, IF-3 binds to the 30S ribosomal subunit and shifts the equilibrium between 70S ribosomes and their 50S and 30S subunits in favor of the free subunits, thus enhancing the availability of 30S subunits on which protein synthesis initiation begins. This chain is Translation initiation factor IF-3, found in Ehrlichia ruminantium (strain Gardel).